A 507-amino-acid polypeptide reads, in one-letter code: RNA demethylase ALKBH9B (507 aa).

Disordered stretches follow at residues 76–102 and 145–183; these read GSERASNNVDDNYDEKSENGEDCDNHS and QEDEFDEEEEEEEEERDSSRKGFDASSMKTPEKPKLSRD. The span at 89 to 100 shows a compositional bias: basic and acidic residues; that stretch reads DEKSENGEDCDN. Residues 145–160 are compositionally biased toward acidic residues; that stretch reads QEDEFDEEEEEEEEER. Positions 174–183 are enriched in basic and acidic residues; the sequence is TPEKPKLSRD. The Fe2OG dioxygenase domain maps to 317-414; sequence VPDSCIVNIY…RISITFRKMD (98 aa). Histidine 335, aspartate 337, and histidine 396 together coordinate Fe cation. Arginine 405 provides a ligand contact to 2-oxoglutarate. The tract at residues 432 to 507 is disordered; sequence EPLPLDLNRS…MPRPSRRNYG (76 aa). The segment covering 440–450 has biased composition (polar residues); the sequence is RSGSTSRFSRL. A compositionally biased stretch (basic residues) spans 497–507; sequence GMPRPSRRNYG.

It belongs to the alkB family. As to quaternary structure, (Microbial infection) Interacts with the capsid protein ORF3b of the alfalfa mosaic virus (AMV). Fe(2+) is required as a cofactor.

It localises to the cytoplasm. Its subcellular location is the P-body. The protein localises to the cytoplasmic granule. The enzyme catalyses an N(6)-methyladenosine in mRNA + 2-oxoglutarate + O2 = an adenosine in mRNA + formaldehyde + succinate + CO2. Its function is as follows. Dioxygenase that demethylates RNA by oxidative demethylation: specifically demethylates N(6)-methyladenosine (m6A) RNA, the most prevalent internal modification of messenger RNA (mRNA) in higher eukaryotes. Modulates viral infection of the alfalfa mosaic virus (AMV) and the m6A abundance in its genomic RNAs. The polypeptide is RNA demethylase ALKBH9B (Arabidopsis thaliana (Mouse-ear cress)).